The following is a 112-amino-acid chain: Cell cycle protein GpsB (112 aa).

The stretch at 42–77 (YQKMADMNNEVVKLSEENNKLKKEVEELRLRVATSR) forms a coiled coil. Residues 75–97 (TSRPSDNKSFSSNNSSSSNNNVD) are disordered. A compositionally biased stretch (low complexity) spans 81–95 (NKSFSSNNSSSSNNN).

This sequence belongs to the GpsB family. As to quaternary structure, forms polymers through the coiled coil domains. Interacts with PBP1, MreC and EzrA.

The protein resides in the cytoplasm. Its function is as follows. Divisome component that associates with the complex late in its assembly, after the Z-ring is formed, and is dependent on DivIC and PBP2B for its recruitment to the divisome. Together with EzrA, is a key component of the system that regulates PBP1 localization during cell cycle progression. Its main role could be the removal of PBP1 from the cell pole after pole maturation is completed. Also contributes to the recruitment of PBP1 to the division complex. Not essential for septum formation. The chain is Cell cycle protein GpsB from Staphylococcus haemolyticus (strain JCSC1435).